Reading from the N-terminus, the 165-residue chain is Crossover junction endodeoxyribonuclease RuvC (165 aa).

Residues Asp-7, Glu-67, and Asp-140 contribute to the active site. 3 residues coordinate Mg(2+): Asp-7, Glu-67, and Asp-140.

The protein belongs to the RuvC family. Homodimer which binds Holliday junction (HJ) DNA. The HJ becomes 2-fold symmetrical on binding to RuvC with unstacked arms; it has a different conformation from HJ DNA in complex with RuvA. In the full resolvosome a probable DNA-RuvA(4)-RuvB(12)-RuvC(2) complex forms which resolves the HJ. Requires Mg(2+) as cofactor.

The protein resides in the cytoplasm. It catalyses the reaction Endonucleolytic cleavage at a junction such as a reciprocal single-stranded crossover between two homologous DNA duplexes (Holliday junction).. The RuvA-RuvB-RuvC complex processes Holliday junction (HJ) DNA during genetic recombination and DNA repair. Endonuclease that resolves HJ intermediates. Cleaves cruciform DNA by making single-stranded nicks across the HJ at symmetrical positions within the homologous arms, yielding a 5'-phosphate and a 3'-hydroxyl group; requires a central core of homology in the junction. The consensus cleavage sequence is 5'-(A/T)TT(C/G)-3'. Cleavage occurs on the 3'-side of the TT dinucleotide at the point of strand exchange. HJ branch migration catalyzed by RuvA-RuvB allows RuvC to scan DNA until it finds its consensus sequence, where it cleaves and resolves the cruciform DNA. This Halothermothrix orenii (strain H 168 / OCM 544 / DSM 9562) protein is Crossover junction endodeoxyribonuclease RuvC.